Consider the following 504-residue polypeptide: Deoxyguanosinetriphosphate triphosphohydrolase (504 aa).

Positions 66 to 273 (RLTHSLEVQQ…MEAADDISYC (208 aa)) constitute an HD domain.

It belongs to the dGTPase family. Type 1 subfamily. Homotetramer. The cofactor is Mg(2+).

The catalysed reaction is dGTP + H2O = 2'-deoxyguanosine + triphosphate + H(+). Its function is as follows. dGTPase preferentially hydrolyzes dGTP over the other canonical NTPs. This Klebsiella pneumoniae subsp. pneumoniae (strain ATCC 700721 / MGH 78578) protein is Deoxyguanosinetriphosphate triphosphohydrolase.